The chain runs to 459 residues: Bifunctional protein GlmU (459 aa).

The segment at M1–R228 is pyrophosphorylase. UDP-N-acetyl-alpha-D-glucosamine-binding positions include L8–G11, K22, Q72, and G77–T78. D101 provides a ligand contact to Mg(2+). The UDP-N-acetyl-alpha-D-glucosamine site is built by G138, E153, N168, and N226. A Mg(2+)-binding site is contributed by N226. Positions V229–N249 are linker. Residues G250 to K459 form an N-acetyltransferase region. Residues R331 and K349 each coordinate UDP-N-acetyl-alpha-D-glucosamine. H361 functions as the Proton acceptor in the catalytic mechanism. UDP-N-acetyl-alpha-D-glucosamine contacts are provided by Y364 and N375. Residues N384 to Y385, S403, T421, and R438 contribute to the acetyl-CoA site.

It in the N-terminal section; belongs to the N-acetylglucosamine-1-phosphate uridyltransferase family. This sequence in the C-terminal section; belongs to the transferase hexapeptide repeat family. In terms of assembly, homotrimer. Mg(2+) serves as cofactor.

Its subcellular location is the cytoplasm. The catalysed reaction is alpha-D-glucosamine 1-phosphate + acetyl-CoA = N-acetyl-alpha-D-glucosamine 1-phosphate + CoA + H(+). It catalyses the reaction N-acetyl-alpha-D-glucosamine 1-phosphate + UTP + H(+) = UDP-N-acetyl-alpha-D-glucosamine + diphosphate. It functions in the pathway nucleotide-sugar biosynthesis; UDP-N-acetyl-alpha-D-glucosamine biosynthesis; N-acetyl-alpha-D-glucosamine 1-phosphate from alpha-D-glucosamine 6-phosphate (route II): step 2/2. It participates in nucleotide-sugar biosynthesis; UDP-N-acetyl-alpha-D-glucosamine biosynthesis; UDP-N-acetyl-alpha-D-glucosamine from N-acetyl-alpha-D-glucosamine 1-phosphate: step 1/1. The protein operates within bacterial outer membrane biogenesis; LPS lipid A biosynthesis. Functionally, catalyzes the last two sequential reactions in the de novo biosynthetic pathway for UDP-N-acetylglucosamine (UDP-GlcNAc). The C-terminal domain catalyzes the transfer of acetyl group from acetyl coenzyme A to glucosamine-1-phosphate (GlcN-1-P) to produce N-acetylglucosamine-1-phosphate (GlcNAc-1-P), which is converted into UDP-GlcNAc by the transfer of uridine 5-monophosphate (from uridine 5-triphosphate), a reaction catalyzed by the N-terminal domain. This Clostridioides difficile (strain 630) (Peptoclostridium difficile) protein is Bifunctional protein GlmU.